Reading from the N-terminus, the 520-residue chain is GMP synthase [glutamine-hydrolyzing] (520 aa).

The region spanning 12–205 (KIIVLDYGSQ…AISICGARGD (194 aa)) is the Glutamine amidotransferase type-1 domain. The active-site Nucleophile is the cysteine 89. Active-site residues include histidine 179 and glutamate 181. One can recognise a GMPS ATP-PPase domain in the interval 206–395 (WSMDNFIDME…LGMPEEIVWR (190 aa)). 233-239 (SGGVDSS) is a binding site for ATP.

As to quaternary structure, homodimer.

It catalyses the reaction XMP + L-glutamine + ATP + H2O = GMP + L-glutamate + AMP + diphosphate + 2 H(+). The protein operates within purine metabolism; GMP biosynthesis; GMP from XMP (L-Gln route): step 1/1. In terms of biological role, catalyzes the synthesis of GMP from XMP. The sequence is that of GMP synthase [glutamine-hydrolyzing] from Streptococcus pyogenes serotype M3 (strain SSI-1).